The primary structure comprises 62 residues: Large ribosomal subunit protein bL28 (62 aa).

It belongs to the bacterial ribosomal protein bL28 family.

The chain is Large ribosomal subunit protein bL28 from Helicobacter pylori (strain Shi470).